Here is an 85-residue protein sequence, read N- to C-terminus: MANIKSAIKRAKLSEERRAHNASIKSDMRTAVKTVEALVSNNDLENAKEAFKTASKKLDKAARKGLIHQNAAARQKSRLAKKVNA.

The segment at 1–22 (MANIKSAIKRAKLSEERRAHNA) is disordered.

It belongs to the bacterial ribosomal protein bS20 family.

Its function is as follows. Binds directly to 16S ribosomal RNA. In Bacillus cytotoxicus (strain DSM 22905 / CIP 110041 / 391-98 / NVH 391-98), this protein is Small ribosomal subunit protein bS20.